We begin with the raw amino-acid sequence, 1144 residues long: Ribonucleoside-diphosphate reductase large subunit (1144 aa).

Positions 1 to 33 (MANRPAASALAGARSPSERQEPREPEVAPPGGD) are disordered. Positions 16 to 26 (PSERQEPREPE) are enriched in basic and acidic residues. The RIP homotypic interaction motif (RHIM) motif lies at 55-75 (AYRISDSSFVQCGSNCSMIID). The disordered stretch occupies residues 118–324 (SGPSATTSVG…TDPGYPVPLE (207 aa)). A compositionally biased stretch (polar residues) spans 119 to 132 (GPSATTSVGTQTSG). Residues 141 to 159 (TPEPQGPQAVPPPPPPPFP) show a composition bias toward pro residues. Basic and acidic residues predominate over residues 164–179 (CCARRDARGGAEKDVG). Positions 192 to 204 (SETEDSDSSDEDT) are enriched in acidic residues. 2 stretches are compositionally biased toward low complexity: residues 205–216 (GSGSETLSRSSS) and 279–305 (GSAT…DVAP). Residues T573, 588–589 (SC), G619, 798–802 (NLCTE), and 975–979 (PTAAS) contribute to the substrate site. C589 and C815 form a disulfide bridge. Catalysis depends on N798, which acts as the Proton acceptor. C800 functions as the Cysteine radical intermediate in the catalytic mechanism. E802 functions as the Proton acceptor in the catalytic mechanism.

The protein belongs to the ribonucleoside diphosphate reductase large chain family. Heterotetramer composed of a homodimer of the large subunit (R1) and a homodimer of the small subunit (R2). Larger multisubunit protein complex are also active, composed of (R1)n(R2)n. May self-assemble (via RIP homotypic interaction motif/RHIM) into homomeric fibrillar amyloid structures. Interacts (via RHIM) with human RIPK1 (via RHIM). Interacts (via RHIM) with human RIPK3 (via RHIM). May interact (via RHIM) with human ZBP1 (via RHIM). Interacts (via C-terminus) with host CASP8.

The enzyme catalyses a 2'-deoxyribonucleoside 5'-diphosphate + [thioredoxin]-disulfide + H2O = a ribonucleoside 5'-diphosphate + [thioredoxin]-dithiol. Its function is as follows. Ribonucleoside-diphosphate reductase holoenzyme that provides the precursors necessary for viral DNA synthesis. Allows virus growth in non-dividing cells, as well as reactivation from latency in infected hosts. Catalyzes the biosynthesis of deoxyribonucleotides from the corresponding ribonucleotides. The N-terminal region confers antiapoptotic activity in differentiated cells such as neurons and is important for viral reactivation to increase neural survivability. Prevents host necroptosis by targeting host RIPK1 and RIPK3, thereby hampering the formation of necroptotic RIPK1-RIPK3 complexes. May form hetero-amyloid structures with host proteins RIPK3 or ZBP1, thereby preventing RIPK3- and ZBP1-mediated necroptosis. In addition, inhibits extrinsic apoptosis by targeting host CASP8. The sequence is that of Ribonucleoside-diphosphate reductase large subunit from Homo sapiens (Human).